A 239-amino-acid chain; its full sequence is 2,3,4,5-tetrahydropyridine-2,6-dicarboxylate N-acetyltransferase (239 aa).

The protein belongs to the transferase hexapeptide repeat family. DapH subfamily.

The enzyme catalyses (S)-2,3,4,5-tetrahydrodipicolinate + acetyl-CoA + H2O = L-2-acetamido-6-oxoheptanedioate + CoA. It participates in amino-acid biosynthesis; L-lysine biosynthesis via DAP pathway; LL-2,6-diaminopimelate from (S)-tetrahydrodipicolinate (acetylase route): step 1/3. Catalyzes the transfer of an acetyl group from acetyl-CoA to tetrahydrodipicolinate. The polypeptide is 2,3,4,5-tetrahydropyridine-2,6-dicarboxylate N-acetyltransferase (Staphylococcus aureus (strain bovine RF122 / ET3-1)).